The sequence spans 431 residues: Acyl transferase 8 (431 aa).

The active-site Proton acceptor is the His169. Disordered regions lie at residues 220 to 247 (VADA…RAPA), 260 to 313 (HHAG…DHLR), and 331 to 400 (GLRV…PPPT). Low complexity predominate over residues 224-234 (RGGVRPGVPRP). Residues 264–273 (DGGGGGGGGR) are compositionally biased toward gly residues. Basic residues-rich tracts occupy residues 297-306 (ERRRRRRRGR) and 335-380 (GRPR…RRLP). Residues 381–394 (QRHDAPRLITERAH) are compositionally biased toward basic and acidic residues.

It belongs to the plant acyltransferase family.

Functionally, involved in the incorporation of ferulate into the cell wall. May act as arabinoxylan feruloyl transferase. The protein is Acyl transferase 8 of Oryza sativa subsp. japonica (Rice).